A 156-amino-acid chain; its full sequence is Ribosomal RNA large subunit methyltransferase H (156 aa).

S-adenosyl-L-methionine contacts are provided by residues leucine 73, glycine 104, and 123-128 (LSSLTL).

Belongs to the RNA methyltransferase RlmH family. In terms of assembly, homodimer.

It is found in the cytoplasm. The enzyme catalyses pseudouridine(1915) in 23S rRNA + S-adenosyl-L-methionine = N(3)-methylpseudouridine(1915) in 23S rRNA + S-adenosyl-L-homocysteine + H(+). Its function is as follows. Specifically methylates the pseudouridine at position 1915 (m3Psi1915) in 23S rRNA. The protein is Ribosomal RNA large subunit methyltransferase H of Neisseria meningitidis serogroup A / serotype 4A (strain DSM 15465 / Z2491).